The primary structure comprises 970 residues: uncharacterized protein (970 aa).

The chain crosses the membrane as a helical span at residues Trp11–Phe31. The disordered stretch occupies residues Ala366–Ile387. Residues Ser367–Ile387 are compositionally biased toward low complexity. 11 consecutive transmembrane segments (helical) span residues Phe515–Leu535, Tyr537–Val557, Ile558–Ile578, Phe614–Leu634, Leu645–Ile665, Phe726–Val746, Ser762–Ile782, Cys789–Leu809, Ile816–Ala836, Ile877–Ile897, and Leu903–Pro923.

It is found in the cell membrane. This is an uncharacterized protein from Mycoplasma genitalium (strain ATCC 33530 / DSM 19775 / NCTC 10195 / G37) (Mycoplasmoides genitalium).